We begin with the raw amino-acid sequence, 168 residues long: Small ribosomal subunit protein uS8 (168 aa).

The segment at 59–93 (EEFKKMKELAEKSPNPKMRRYLQQLIDYNKGTQYP) is not found in other S8 sequences.

Belongs to the universal ribosomal protein uS8 family. As to quaternary structure, part of the 30S ribosomal subunit. Contacts proteins S5 and S12.

In terms of biological role, one of the primary rRNA binding proteins, it binds directly to 16S rRNA central domain where it helps coordinate assembly of the platform of the 30S subunit. The sequence is that of Small ribosomal subunit protein uS8 from Aquifex pyrophilus.